A 126-amino-acid polypeptide reads, in one-letter code: DNA-directed RNA polymerase I subunit RPA12 (126 aa).

Zn(2+)-binding residues include Cys-20, Cys-23, Cys-38, Cys-41, Cys-87, and Cys-90. Residues 20–41 (CSDCGSVLPLPGAQDTVTCIRC) form a C4-type zinc finger. The TFIIS-type zinc-finger motif lies at 83-123 (VDRRCPRCGHEGMAYHTRQMRSADEGQTVFYTCTNCKFQEK). Positions 106-107 (DE) match the Hairpin motif. Zn(2+) contacts are provided by Cys-115 and Cys-118.

It belongs to the archaeal RpoM/eukaryotic RPA12/RPB9/RPC11 RNA polymerase family. As to quaternary structure, component of the RNA polymerase I (Pol I) complex consisting of 13 subunits: a ten-subunit catalytic core composed of POLR1A/RPA1, POLR1B/RPA2, POLR1C/RPAC1, POLR1D/RPAC2, POLR1H/RPA12, POLR2E/RPABC1, POLR2F/RPABC2, POLR2H/RPABC3, POLR2K/RPABC4 and POLR2L/RPABC5; a mobile stalk subunit POLR1F/RPA43 protruding from the core and additional subunits homologous to general transcription factors POLR1E/RPA49 and POLR1G/RPA34. Part of Pol I pre-initiation complex (PIC), in which Pol I core assembles with RRN3 and promoter-bound UTBF and SL1/TIF-IB complex.

Its subcellular location is the nucleus. It localises to the nucleolus. Functionally, core component of RNA polymerase I (Pol I), a DNA-dependent RNA polymerase which synthesizes ribosomal RNA precursors using the four ribonucleoside triphosphates as substrates. Can mediate Pol I proofreading of the nascent RNA transcript. Anchors into the Pol I active site to monitor transcription fidelity and cleave mis-incorporated 5'-ribonucleotides. This chain is DNA-directed RNA polymerase I subunit RPA12, found in Homo sapiens (Human).